The following is a 286-amino-acid chain: Puff II/9-1 protein (286 aa).

Positions 1 to 19 (MKQFIVLTVVLLAIQELQG) are cleaved as a signal peptide. Positions 61 to 235 (ITAIKKDNDF…ENALNTLRCE (175 aa)) are helical. The N-linked (GlcNAc...) asparagine glycan is linked to Asn156.

The chain is Puff II/9-1 protein (II/9-1) from Bradysia coprophila (Dark-winged fungus gnat).